We begin with the raw amino-acid sequence, 986 residues long: Bifunctional glutamine synthetase adenylyltransferase/adenylyl-removing enzyme (986 aa).

The adenylyl removase stretch occupies residues 1-471 (MAEAIERSLS…RYAQLFEQEA (471 aa)). The interval 475–986 (TETGNLVFTG…RIFQGVVAAA (512 aa)) is adenylyl transferase.

Belongs to the GlnE family. Requires Mg(2+) as cofactor.

The catalysed reaction is [glutamine synthetase]-O(4)-(5'-adenylyl)-L-tyrosine + phosphate = [glutamine synthetase]-L-tyrosine + ADP. The enzyme catalyses [glutamine synthetase]-L-tyrosine + ATP = [glutamine synthetase]-O(4)-(5'-adenylyl)-L-tyrosine + diphosphate. Functionally, involved in the regulation of glutamine synthetase GlnA, a key enzyme in the process to assimilate ammonia. When cellular nitrogen levels are high, the C-terminal adenylyl transferase (AT) inactivates GlnA by covalent transfer of an adenylyl group from ATP to specific tyrosine residue of GlnA, thus reducing its activity. Conversely, when nitrogen levels are low, the N-terminal adenylyl removase (AR) activates GlnA by removing the adenylyl group by phosphorolysis, increasing its activity. The regulatory region of GlnE binds the signal transduction protein PII (GlnB) which indicates the nitrogen status of the cell. The protein is Bifunctional glutamine synthetase adenylyltransferase/adenylyl-removing enzyme of Rhizobium meliloti (strain 1021) (Ensifer meliloti).